Consider the following 62-residue polypeptide: Inner membrane protein p12 (62 aa).

A helical membrane pass occupies residues 16–36 (LLIVAIVVVIMAIMLYYFWWM).

This sequence belongs to the asfivirus inner membrane protein p12 family. In terms of assembly, homomultimer; disulfide-linked. Not glycosylated.

It is found in the virion membrane. The sequence is that of Inner membrane protein p12 from African swine fever virus (isolate Pig/Kenya/KEN-50/1950) (ASFV).